Consider the following 154-residue polypeptide: Ribosome maturation factor RimP (154 aa).

The protein belongs to the RimP family.

The protein localises to the cytoplasm. In terms of biological role, required for maturation of 30S ribosomal subunits. The polypeptide is Ribosome maturation factor RimP (Hydrogenobaculum sp. (strain Y04AAS1)).